Consider the following 234-residue polypeptide: Opacity protein opA55 (234 aa).

Residue alanine 1 is a signal peptide.

The protein belongs to the opacity porin family.

The protein resides in the cell outer membrane. Functionally, implicated in a number of adherence functions. OPA proteins are implicated in pathogenesis and are subject to phase variation. The sequence is that of Opacity protein opA55 (opaE) from Neisseria gonorrhoeae.